A 248-amino-acid chain; its full sequence is tRNA N(3)-methylcytidine methyltransferase trm141 (248 aa).

Tryptophan 23, tyrosine 27, glycine 63, aspartate 86, aspartate 112, and isoleucine 133 together coordinate S-adenosyl-L-methionine.

Belongs to the methyltransferase superfamily. METL family.

Its subcellular location is the cytoplasm. It localises to the nucleus. The enzyme catalyses cytidine(32) in tRNA(Ser) + S-adenosyl-L-methionine = N(3)-methylcytidine(32) in tRNA(Ser) + S-adenosyl-L-homocysteine + H(+). Its function is as follows. S-adenosyl-L-methionine-dependent methyltransferase that mediates N(3)-methylcytidine modification of residue 32 of the tRNA anticodon loop of tRNA(Ser). N(3)-methylcytidine methylation by trm141 requires the formation of N(6)-dimethylallyladenosine(37) (i6A37) by tit1 as prerequisite. Does not catalyze N(3)-methylcytidine modification of tRNA(Thr). This is tRNA N(3)-methylcytidine methyltransferase trm141 from Schizosaccharomyces pombe (strain 972 / ATCC 24843) (Fission yeast).